Reading from the N-terminus, the 247-residue chain is Thioredoxin reductase-like selenoprotein T homolog selt-1.1 (247 aa).

Residues 1-26 (MSRFGVFIIGVLFFMSVCDVLRTVSA) form the signal peptide. The cysteines at positions 92 and 95 are disulfide-linked.

This sequence belongs to the SelWTH family. SELT subfamily. In terms of tissue distribution, broadly expressed in neurons of nervous system including ADL, ASH, ASI, ASJ, ASK and AWB amphid sensilla neurons, in epithelial cells including hypodermal, arcade, pharyngeal, vulval and rectal cells, and in somatic muscle cells of the head, neck and body wall, and non-striated pharyngeal muscles.

Its subcellular location is the endoplasmic reticulum. The catalysed reaction is [thioredoxin]-dithiol + NADP(+) = [thioredoxin]-disulfide + NADPH + H(+). Functionally, probably has thioredoxin reductase-like oxidoreductase activity. Plays a role in regulating the oxidative stress response, and odorant and pathogenic bacteria avoidance behavior. This chain is Thioredoxin reductase-like selenoprotein T homolog selt-1.1, found in Caenorhabditis elegans.